The chain runs to 331 residues: Adenosine deaminase (331 aa).

2 residues coordinate Zn(2+): His12 and His14. His14, Asp16, and Gly170 together coordinate substrate. His197 contributes to the Zn(2+) binding site. Glu200 (proton donor) is an active-site residue. Asp278 is a binding site for Zn(2+). Asp279 contributes to the substrate binding site.

It belongs to the metallo-dependent hydrolases superfamily. Adenosine and AMP deaminases family. Adenosine deaminase subfamily. The cofactor is Zn(2+).

The catalysed reaction is adenosine + H2O + H(+) = inosine + NH4(+). It carries out the reaction 2'-deoxyadenosine + H2O + H(+) = 2'-deoxyinosine + NH4(+). Its function is as follows. Catalyzes the hydrolytic deamination of adenosine and 2-deoxyadenosine. The chain is Adenosine deaminase from Shewanella baltica (strain OS155 / ATCC BAA-1091).